A 152-amino-acid polypeptide reads, in one-letter code: Large ribosomal subunit protein uL15 (152 aa).

Over residues 1–13 the composition is skewed to polar residues; it reads MLTLGNLSPQEGS. Positions 1-62 are disordered; the sequence is MLTLGNLSPQ…GGQMPLQRRL (62 aa). Residues 31–40 are compositionally biased toward basic residues; sequence TAGRGHKGFK.

The protein belongs to the universal ribosomal protein uL15 family. Part of the 50S ribosomal subunit.

Its function is as follows. Binds to the 23S rRNA. The protein is Large ribosomal subunit protein uL15 of Desulfotalea psychrophila (strain LSv54 / DSM 12343).